The sequence spans 244 residues: Ribonuclease PH (244 aa).

Phosphate-binding positions include arginine 90 and 128 to 130 (GTR).

It belongs to the RNase PH family. As to quaternary structure, homohexameric ring arranged as a trimer of dimers.

The enzyme catalyses tRNA(n+1) + phosphate = tRNA(n) + a ribonucleoside 5'-diphosphate. Phosphorolytic 3'-5' exoribonuclease that plays an important role in tRNA 3'-end maturation. Removes nucleotide residues following the 3'-CCA terminus of tRNAs; can also add nucleotides to the ends of RNA molecules by using nucleoside diphosphates as substrates, but this may not be physiologically important. Probably plays a role in initiation of 16S rRNA degradation (leading to ribosome degradation) during starvation. This is Ribonuclease PH from Cutibacterium acnes (strain DSM 16379 / KPA171202) (Propionibacterium acnes).